The sequence spans 547 residues: Isoflavonoid 7-O-beta-apiosyl-glucoside beta-glycosidase (547 aa).

Residues 1 to 31 form the signal peptide; sequence MHAMTFKAILLLGLLALVSTSASIAFAKEVR. Position 59 (Gln59) interacts with a beta-D-glucoside. Residues Asn72 and Asn132 are each glycosylated (N-linked (GlcNAc...) asparagine). Position 159 (His159) interacts with a beta-D-glucoside. Asn175 carries N-linked (GlcNAc...) asparagine glycosylation. An a beta-D-glucoside-binding site is contributed by 204-205; it reads NE. Glu205 serves as the catalytic Proton donor. A disulfide bond links Cys224 and Cys232. The N-linked (GlcNAc...) asparagine glycan is linked to Asn285. Residues Tyr348, Glu419, Trp468, 475–476, and Phe484 each bind a beta-D-glucoside; that span reads EW. The Nucleophile role is filled by Glu419. N-linked (GlcNAc...) asparagine glycosylation occurs at Asn490.

This sequence belongs to the glycosyl hydrolase 1 family. In terms of assembly, homotetramer.

The enzyme catalyses 7-[beta-D-apiofuranosyl-(1-&gt;6)-beta-D-glucopyranosyloxy]isoflavonoid + H2O = a 7-hydroxyisoflavonoid + beta-D-apiofuranosyl-(1-&gt;6)-D-glucose.. With respect to regulation, not inhibited by iron, calcium, mercury, manganese, zinc or EDTA. Its function is as follows. Hydrolyzes dalpatein 7-O-beta-D-apiofuranosyl-(1-&gt;6)-beta-D-glucopyranoside and dalnigrein 7-O-beta-D-apiofuranosyl-(1-&gt;6)-beta-D-glucopyranoside. Also has activity towards pNP-beta-D-fucoside and pNP-beta-D-glucoside, but not pNP-beta-cellobioside. This Dalbergia nigrescens (Thai blackwood) protein is Isoflavonoid 7-O-beta-apiosyl-glucoside beta-glycosidase.